A 298-amino-acid polypeptide reads, in one-letter code: Oligodendrocyte transcription factor 2 (298 aa).

Polar residues predominate over residues 1–13 (MDSDASLVSSRPS). 2 disordered regions span residues 1-60 (MDSD…SAEL) and 79-102 (SSSSSASSASSASSKKDKKQMTEP). Over residues 26-41 (NKGGGGGGGGGGGFTG) the composition is skewed to gly residues. The span at 79-91 (SSSSSASSASSAS) shows a compositional bias: low complexity. The bHLH domain maps to 106–160 (QLRLKINSRERKRMHDLNIAMDGLREVMPYAHGPSVRKLSKIATLLLARNYILML).

It localises to the nucleus. In terms of biological role, required for oligodendrocyte and motor neuron specification in the spinal cord. The protein is Oligodendrocyte transcription factor 2 (OLIG2) of Gallus gallus (Chicken).